The chain runs to 548 residues: 1,3-beta-glucanosyltransferase gel4 (548 aa).

Positions 1–25 (MKFVYAAAGASLVGSALATLPVIEA) are cleaved as a signal peptide. 2 N-linked (GlcNAc...) asparagine glycosylation sites follow: asparagine 51 and asparagine 69. A disulfide bond links cysteine 88 and cysteine 117. (1,3-beta-D-glucosyl)n contacts are provided by residues tyrosine 106, 133-141 (SAPSESINR), asparagine 174, and glutamate 175. Catalysis depends on glutamate 175, which acts as the Proton donor. N-linked (GlcNAc...) asparagine glycosylation is present at asparagine 181. The (1,3-beta-D-glucosyl)n site is built by aspartate 217 and arginine 222. Intrachain disulfides connect cysteine 231-cysteine 364, cysteine 249-cysteine 280, cysteine 386-cysteine 437, cysteine 395-cysteine 461, and cysteine 414-cysteine 419. Catalysis depends on glutamate 277, which acts as the Nucleophile. Position 309 (tyrosine 309) interacts with (1,3-beta-D-glucosyl)n. Asparagine 425 carries N-linked (GlcNAc...) asparagine glycosylation. Alanine 519 carries GPI-like-anchor amidated alanine lipidation. A propeptide spans 520-548 (SPMAVKVGNWQFGAYIATALFAGVGMLVL) (removed in mature form).

It belongs to the glycosyl hydrolase 72 family. Post-translationally, the GPI-like anchor contains a phosphoceramide lipid group.

It localises to the cell membrane. Functionally, splits internally a 1,3-beta-glucan molecule and transfers the newly generated reducing end (the donor) to the non-reducing end of another 1,3-beta-glucan molecule (the acceptor) forming a 1,3-beta linkage, resulting in the elongation of 1,3-beta-glucan chains in the cell wall. Involved in cell wall morphogenesis. This Aspergillus fumigatus (strain ATCC MYA-4609 / CBS 101355 / FGSC A1100 / Af293) (Neosartorya fumigata) protein is 1,3-beta-glucanosyltransferase gel4 (gel4).